A 94-amino-acid polypeptide reads, in one-letter code: MNLYEVLRRPLISEKNSVQAVQNKYVFEIAKGANKRMVKLAVEQAFNVTVEDVNMLHIPGKQKRMGRNLVQTAGLRKAIITLKEGDKITLFEGV.

Belongs to the universal ribosomal protein uL23 family. In terms of assembly, part of the 50S ribosomal subunit. Contacts protein L29, and trigger factor when it is bound to the ribosome.

One of the early assembly proteins it binds 23S rRNA. One of the proteins that surrounds the polypeptide exit tunnel on the outside of the ribosome. Forms the main docking site for trigger factor binding to the ribosome. The sequence is that of Large ribosomal subunit protein uL23 from Dehalococcoides mccartyi (strain ATCC BAA-2266 / KCTC 15142 / 195) (Dehalococcoides ethenogenes (strain 195)).